Reading from the N-terminus, the 210-residue chain is Somatotropin (210 aa).

Residues 1–22 (MGQVFLLMPVLLVSCFLSQGAA) form the signal peptide. Residue His-38 participates in Zn(2+) binding. Cysteines 71 and 183 form a disulfide. Glu-192 is a Zn(2+) binding site. Cys-200 and Cys-208 form a disulfide bridge.

It belongs to the somatotropin/prolactin family.

Its subcellular location is the secreted. In terms of biological role, growth hormone plays an important role in growth control and is involved in the regulation of several anabolic processes. Implicated as an osmoregulatory substance important for seawater adaptation. In Oncorhynchus tshawytscha (Chinook salmon), this protein is Somatotropin (gh).